Consider the following 268-residue polypeptide: Imidazole glycerol phosphate synthase subunit HisF (268 aa).

Active-site residues include Asp-12 and Asp-131.

This sequence belongs to the HisA/HisF family. Heterodimer of HisH and HisF.

Its subcellular location is the cytoplasm. It catalyses the reaction 5-[(5-phospho-1-deoxy-D-ribulos-1-ylimino)methylamino]-1-(5-phospho-beta-D-ribosyl)imidazole-4-carboxamide + L-glutamine = D-erythro-1-(imidazol-4-yl)glycerol 3-phosphate + 5-amino-1-(5-phospho-beta-D-ribosyl)imidazole-4-carboxamide + L-glutamate + H(+). The protein operates within amino-acid biosynthesis; L-histidine biosynthesis; L-histidine from 5-phospho-alpha-D-ribose 1-diphosphate: step 5/9. Functionally, IGPS catalyzes the conversion of PRFAR and glutamine to IGP, AICAR and glutamate. The HisF subunit catalyzes the cyclization activity that produces IGP and AICAR from PRFAR using the ammonia provided by the HisH subunit. This is Imidazole glycerol phosphate synthase subunit HisF from Chelativorans sp. (strain BNC1).